The chain runs to 466 residues: Cysteine--tRNA ligase (466 aa).

Cysteine 28 serves as a coordination point for Zn(2+). The 'HIGH' region signature appears at 30–40; sequence PTVYNFFHIGN. Positions 208, 233, and 237 each coordinate Zn(2+). The 'KMSKS' region signature appears at 265–269; that stretch reads KMSKS. Lysine 268 contributes to the ATP binding site.

The protein belongs to the class-I aminoacyl-tRNA synthetase family. As to quaternary structure, monomer. The cofactor is Zn(2+).

It localises to the cytoplasm. It catalyses the reaction tRNA(Cys) + L-cysteine + ATP = L-cysteinyl-tRNA(Cys) + AMP + diphosphate. This is Cysteine--tRNA ligase from Clostridium perfringens (strain ATCC 13124 / DSM 756 / JCM 1290 / NCIMB 6125 / NCTC 8237 / Type A).